Consider the following 93-residue polypeptide: Bublin coiled-coil protein (93 aa).

Disordered stretches follow at residues 1–26 (MAGP…GDTF) and 74–93 (QQQS…QPPA). A compositionally biased stretch (acidic residues) spans 17–26 (DEGDEGGDTF). Positions 59-80 (LKELLESNRQTRLEFQQQSKQL) form a coiled coil.

It belongs to the UPF0184 (EST00098) family.

It is found in the cell junction. The protein resides in the cytoplasm. It localises to the cytoskeleton. In terms of biological role, essential for intermediate filament organization in intestinal cells, interacts with intermediate filament and regulates intestinal lumen morphology. This is Bublin coiled-coil protein (BBLN) from Taeniopygia guttata (Zebra finch).